The sequence spans 46 residues: Iota-conotoxin-like R11.17 (46 aa).

A 4-hydroxyproline mark is found at Pro2 and Pro11. Cystine bridges form between Cys5–Cys19, Cys12–Cys22, Cys18–Cys27, and Cys21–Cys38. Pro29 carries the 4-hydroxyproline modification. A D-phenylalanine modification is found at Phe44.

The protein belongs to the conotoxin I1 superfamily. As to expression, expressed by the venom duct.

It localises to the secreted. Its function is as follows. Iota-conotoxins bind to voltage-gated sodium channels (Nav) and act as agonists by shifting the voltage-dependence of activation to more hyperpolarized levels. Produces general excitatory symptoms. The chain is Iota-conotoxin-like R11.17 from Conus radiatus (Rayed cone).